The primary structure comprises 450 residues: Tubulin alpha chain (450 aa).

Glutamine 11 is a binding site for GTP. At lysine 40 the chain carries N6-acetyllysine. Positions 71, 140, 144, 145, 179, 206, and 228 each coordinate GTP. Glutamate 71 serves as a coordination point for Mg(2+). The active site involves glutamate 254.

The protein belongs to the tubulin family. In terms of assembly, dimer of alpha and beta chains. A typical microtubule is a hollow water-filled tube with an outer diameter of 25 nm and an inner diameter of 15 nM. Alpha-beta heterodimers associate head-to-tail to form protofilaments running lengthwise along the microtubule wall with the beta-tubulin subunit facing the microtubule plus end conferring a structural polarity. Microtubules usually have 13 protofilaments but different protofilament numbers can be found in some organisms and specialized cells. The cofactor is Mg(2+). Post-translationally, acetylation of alpha chains at Lys-40 stabilizes microtubules and affects affinity and processivity of microtubule motors. This modification has a role in multiple cellular functions, ranging from cell motility, cell cycle progression or cell differentiation to intracellular trafficking and signaling.

It is found in the cytoplasm. Its subcellular location is the cytoskeleton. It carries out the reaction GTP + H2O = GDP + phosphate + H(+). Its function is as follows. Tubulin is the major constituent of microtubules, a cylinder consisting of laterally associated linear protofilaments composed of alpha- and beta-tubulin heterodimers. Microtubules grow by the addition of GTP-tubulin dimers to the microtubule end, where a stabilizing cap forms. Below the cap, tubulin dimers are in GDP-bound state, owing to GTPase activity of alpha-tubulin. The chain is Tubulin alpha chain from Tyrophagus putrescentiae (Mold mite).